A 140-amino-acid polypeptide reads, in one-letter code: Nucleoside diphosphate kinase (140 aa).

Residues Lys11, Phe59, Arg87, Thr93, Arg104, and Asn114 each contribute to the ATP site. The active-site Pros-phosphohistidine intermediate is the His117.

Belongs to the NDK family. As to quaternary structure, homotetramer. It depends on Mg(2+) as a cofactor.

The protein localises to the cytoplasm. The catalysed reaction is a 2'-deoxyribonucleoside 5'-diphosphate + ATP = a 2'-deoxyribonucleoside 5'-triphosphate + ADP. It catalyses the reaction a ribonucleoside 5'-diphosphate + ATP = a ribonucleoside 5'-triphosphate + ADP. Its function is as follows. Major role in the synthesis of nucleoside triphosphates other than ATP. The ATP gamma phosphate is transferred to the NDP beta phosphate via a ping-pong mechanism, using a phosphorylated active-site intermediate. The chain is Nucleoside diphosphate kinase from Beijerinckia indica subsp. indica (strain ATCC 9039 / DSM 1715 / NCIMB 8712).